Here is a 426-residue protein sequence, read N- to C-terminus: Serine--tRNA ligase (426 aa).

The disordered stretch occupies residues Val103–Pro129. Over residues Gly114–Arg125 the composition is skewed to basic and acidic residues. Thr230–Glu232 lines the L-serine pocket. Arg261–Glu263 serves as a coordination point for ATP. L-serine is bound at residue Glu284. Glu348–Ser351 is a binding site for ATP. Ser384 is a binding site for L-serine.

Belongs to the class-II aminoacyl-tRNA synthetase family. Type-1 seryl-tRNA synthetase subfamily. In terms of assembly, homodimer. The tRNA molecule binds across the dimer.

It is found in the cytoplasm. The catalysed reaction is tRNA(Ser) + L-serine + ATP = L-seryl-tRNA(Ser) + AMP + diphosphate + H(+). It carries out the reaction tRNA(Sec) + L-serine + ATP = L-seryl-tRNA(Sec) + AMP + diphosphate + H(+). It participates in aminoacyl-tRNA biosynthesis; selenocysteinyl-tRNA(Sec) biosynthesis; L-seryl-tRNA(Sec) from L-serine and tRNA(Sec): step 1/1. Functionally, catalyzes the attachment of serine to tRNA(Ser). Is also able to aminoacylate tRNA(Sec) with serine, to form the misacylated tRNA L-seryl-tRNA(Sec), which will be further converted into selenocysteinyl-tRNA(Sec). In Dichelobacter nodosus (strain VCS1703A), this protein is Serine--tRNA ligase.